A 345-amino-acid polypeptide reads, in one-letter code: GTPase Obg (345 aa).

Positions 1 to 159 (MKFLDQAKVY…KWIWLRLKLI (159 aa)) constitute an Obg domain. The 168-residue stretch at 160 to 327 (ADAGLVGLPN…ALRALLAVID (168 aa)) folds into the OBG-type G domain. GTP contacts are provided by residues 166 to 173 (GLPNAGKS), 191 to 195 (FTTLH), 212 to 215 (DIPG), 279 to 282 (SKID), and 308 to 310 (SSQ). Mg(2+) is bound by residues serine 173 and threonine 193.

Belongs to the TRAFAC class OBG-HflX-like GTPase superfamily. OBG GTPase family. Monomer. Mg(2+) is required as a cofactor.

Its subcellular location is the cytoplasm. An essential GTPase which binds GTP, GDP and possibly (p)ppGpp with moderate affinity, with high nucleotide exchange rates and a fairly low GTP hydrolysis rate. Plays a role in control of the cell cycle, stress response, ribosome biogenesis and in those bacteria that undergo differentiation, in morphogenesis control. This is GTPase Obg from Azorhizobium caulinodans (strain ATCC 43989 / DSM 5975 / JCM 20966 / LMG 6465 / NBRC 14845 / NCIMB 13405 / ORS 571).